Reading from the N-terminus, the 244-residue chain is 5-oxoprolinase subunit A (244 aa).

This sequence belongs to the LamB/PxpA family. Forms a complex composed of PxpA, PxpB and PxpC.

The catalysed reaction is 5-oxo-L-proline + ATP + 2 H2O = L-glutamate + ADP + phosphate + H(+). Catalyzes the cleavage of 5-oxoproline to form L-glutamate coupled to the hydrolysis of ATP to ADP and inorganic phosphate. This Salmonella dublin (strain CT_02021853) protein is 5-oxoprolinase subunit A.